The sequence spans 257 residues: Imidazole glycerol phosphate synthase subunit HisF (257 aa).

Catalysis depends on residues D12 and D131.

Belongs to the HisA/HisF family. Heterodimer of HisH and HisF.

The protein localises to the cytoplasm. It carries out the reaction 5-[(5-phospho-1-deoxy-D-ribulos-1-ylimino)methylamino]-1-(5-phospho-beta-D-ribosyl)imidazole-4-carboxamide + L-glutamine = D-erythro-1-(imidazol-4-yl)glycerol 3-phosphate + 5-amino-1-(5-phospho-beta-D-ribosyl)imidazole-4-carboxamide + L-glutamate + H(+). Its pathway is amino-acid biosynthesis; L-histidine biosynthesis; L-histidine from 5-phospho-alpha-D-ribose 1-diphosphate: step 5/9. IGPS catalyzes the conversion of PRFAR and glutamine to IGP, AICAR and glutamate. The HisF subunit catalyzes the cyclization activity that produces IGP and AICAR from PRFAR using the ammonia provided by the HisH subunit. The polypeptide is Imidazole glycerol phosphate synthase subunit HisF (Burkholderia vietnamiensis (strain G4 / LMG 22486) (Burkholderia cepacia (strain R1808))).